Reading from the N-terminus, the 140-residue chain is Large ribosomal subunit protein uL11 (140 aa).

This sequence belongs to the universal ribosomal protein uL11 family. In terms of assembly, part of the ribosomal stalk of the 50S ribosomal subunit. Interacts with L10 and the large rRNA to form the base of the stalk. L10 forms an elongated spine to which L12 dimers bind in a sequential fashion forming a multimeric L10(L12)X complex. One or more lysine residues are methylated.

Forms part of the ribosomal stalk which helps the ribosome interact with GTP-bound translation factors. The chain is Large ribosomal subunit protein uL11 from Brachyspira hyodysenteriae (strain ATCC 49526 / WA1).